We begin with the raw amino-acid sequence, 333 residues long: Anthranilate phosphoribosyltransferase (333 aa).

5-phospho-alpha-D-ribose 1-diphosphate-binding positions include Gly-81, 84–85 (GD), Thr-89, 91–94 (NIST), 109–117 (KHGNRSVSS), and Ala-121. Gly-81 serves as a coordination point for anthranilate. Residue Ser-93 coordinates Mg(2+). Residue Asn-112 participates in anthranilate binding. Residue Arg-167 participates in anthranilate binding. Residues Asp-225 and Glu-226 each contribute to the Mg(2+) site.

It belongs to the anthranilate phosphoribosyltransferase family. In terms of assembly, homodimer. The cofactor is Mg(2+).

The enzyme catalyses N-(5-phospho-beta-D-ribosyl)anthranilate + diphosphate = 5-phospho-alpha-D-ribose 1-diphosphate + anthranilate. Its pathway is amino-acid biosynthesis; L-tryptophan biosynthesis; L-tryptophan from chorismate: step 2/5. Its function is as follows. Catalyzes the transfer of the phosphoribosyl group of 5-phosphorylribose-1-pyrophosphate (PRPP) to anthranilate to yield N-(5'-phosphoribosyl)-anthranilate (PRA). This is Anthranilate phosphoribosyltransferase from Haemophilus influenzae (strain PittEE).